A 187-amino-acid polypeptide reads, in one-letter code: UPF0200 protein MM_1313 (187 aa).

9–16 (GMPASGKS) provides a ligand contact to ATP.

Belongs to the UPF0200 family.

This chain is UPF0200 protein MM_1313, found in Methanosarcina mazei (strain ATCC BAA-159 / DSM 3647 / Goe1 / Go1 / JCM 11833 / OCM 88) (Methanosarcina frisia).